The chain runs to 298 residues: Protein ILRUN (298 aa).

Positions 199–277 (NTQPHRKVEG…SVNLSPSSHA (79 aa)) are disordered. Phosphoserine is present on residues S215 and S222. Positions 242-255 (TWAPAPDTWAPAPD) are enriched in low complexity. Positions 262–277 (NRLSQNSVNLSPSSHA) are enriched in polar residues. S272 bears the Phosphoserine mark.

In terms of assembly, interacts with IRF3; the interaction inhibits IRF3 binding to its DNA consensus sequence. As to expression, expressed in lung (at protein level).

The protein resides in the cytoplasm. It localises to the nucleus. Negative regulator of innate antiviral response. Blocks IRF3-dependent cytokine production such as IFNA, IFNB and TNF. Interacts with IRF3 and inhibits IRF3 recruitment to type I IFN promoter sequences while also reducing nuclear levels of the coactivators EP300 and CREBBP. The chain is Protein ILRUN from Homo sapiens (Human).